A 249-amino-acid chain; its full sequence is 1-(5-phosphoribosyl)-5-[(5-phosphoribosylamino)methylideneamino] imidazole-4-carboxamide isomerase (249 aa).

D10 functions as the Proton acceptor in the catalytic mechanism. The active-site Proton donor is D131.

Belongs to the HisA/HisF family.

It localises to the cytoplasm. The enzyme catalyses 1-(5-phospho-beta-D-ribosyl)-5-[(5-phospho-beta-D-ribosylamino)methylideneamino]imidazole-4-carboxamide = 5-[(5-phospho-1-deoxy-D-ribulos-1-ylimino)methylamino]-1-(5-phospho-beta-D-ribosyl)imidazole-4-carboxamide. Its pathway is amino-acid biosynthesis; L-histidine biosynthesis; L-histidine from 5-phospho-alpha-D-ribose 1-diphosphate: step 4/9. This Brevibacillus brevis (strain 47 / JCM 6285 / NBRC 100599) protein is 1-(5-phosphoribosyl)-5-[(5-phosphoribosylamino)methylideneamino] imidazole-4-carboxamide isomerase.